A 353-amino-acid chain; its full sequence is MVQEKVRVSTRTLQWKCVEARADSKRLYYGRFILSPLMKGQADTIGIAMRRALLGEIEGTCITRAKSEKIPHEYSTLVGIQESVHEILMNLKEIILKSNLYGTCDASICIRGPGYVTAQDIISPPYVEIVDNTQHIASLAEPIDLCIGLQIERNRGYLIKTPNNNFQDGSYPIDAVFMPVRNANHSIHSYGNGNEKQEILFLEIWTNGSLTPKEALHQASRNLIDLFIPFLHTEEENLHLADNQHTVPLPPFTFHEKLTKLRKNKKKIALKSIFIDQSELPPRIYNCLIRSNIYTLLDLLNNSQEDLMKIEHFRIEDVKAILGILEKHFAIDLPKKLKIGFESLAQSIYSESG.

An alpha N-terminal domain (alpha-NTD) region spans residues Met1–Glu234. Residues Lys266–Gly353 are alpha C-terminal domain (alpha-CTD).

The protein belongs to the RNA polymerase alpha chain family. In terms of assembly, in plastids the minimal PEP RNA polymerase catalytic core is composed of four subunits: alpha, beta, beta', and beta''. When a (nuclear-encoded) sigma factor is associated with the core the holoenzyme is formed, which can initiate transcription.

The protein localises to the plastid. Its subcellular location is the chloroplast. It carries out the reaction RNA(n) + a ribonucleoside 5'-triphosphate = RNA(n+1) + diphosphate. Its function is as follows. DNA-dependent RNA polymerase catalyzes the transcription of DNA into RNA using the four ribonucleoside triphosphates as substrates. In Panax ginseng (Korean ginseng), this protein is DNA-directed RNA polymerase subunit alpha.